Consider the following 298-residue polypeptide: UDP-N-acetylenolpyruvoylglucosamine reductase (298 aa).

The FAD-binding PCMH-type domain maps to 26–191 (KTGGAADVFV…LDATFSLALE (166 aa)). Arg-170 is an active-site residue. Residue Ser-220 is the Proton donor of the active site. Residue Glu-290 is part of the active site.

The protein belongs to the MurB family. FAD serves as cofactor.

It localises to the cytoplasm. It catalyses the reaction UDP-N-acetyl-alpha-D-muramate + NADP(+) = UDP-N-acetyl-3-O-(1-carboxyvinyl)-alpha-D-glucosamine + NADPH + H(+). It participates in cell wall biogenesis; peptidoglycan biosynthesis. Cell wall formation. This chain is UDP-N-acetylenolpyruvoylglucosamine reductase, found in Listeria monocytogenes serovar 1/2a (strain ATCC BAA-679 / EGD-e).